The sequence spans 181 residues: ATP-dependent protease subunit HslV (181 aa).

Residue Thr8 is part of the active site. Residues Gly165, Cys168, and Thr171 each coordinate Na(+).

This sequence belongs to the peptidase T1B family. HslV subfamily. In terms of assembly, a double ring-shaped homohexamer of HslV is capped on each side by a ring-shaped HslU homohexamer. The assembly of the HslU/HslV complex is dependent on binding of ATP.

It localises to the cytoplasm. The catalysed reaction is ATP-dependent cleavage of peptide bonds with broad specificity.. Its activity is regulated as follows. Allosterically activated by HslU binding. Its function is as follows. Protease subunit of a proteasome-like degradation complex believed to be a general protein degrading machinery. This chain is ATP-dependent protease subunit HslV, found in Oceanobacillus iheyensis (strain DSM 14371 / CIP 107618 / JCM 11309 / KCTC 3954 / HTE831).